The chain runs to 91 residues: PqqA binding protein (91 aa).

The protein belongs to the PqqD family. As to quaternary structure, monomer. Interacts with PqqE.

It participates in cofactor biosynthesis; pyrroloquinoline quinone biosynthesis. In terms of biological role, functions as a PqqA binding protein and presents PqqA to PqqE, in the pyrroloquinoline quinone (PQQ) biosynthetic pathway. This Pseudomonas entomophila (strain L48) protein is PqqA binding protein.